The sequence spans 121 residues: Small ribosomal subunit protein bS6 (121 aa).

Belongs to the bacterial ribosomal protein bS6 family.

Functionally, binds together with bS18 to 16S ribosomal RNA. The chain is Small ribosomal subunit protein bS6 from Rickettsia canadensis (strain McKiel).